Here is a 260-residue protein sequence, read N- to C-terminus: Ribonuclease HII (260 aa).

One can recognise an RNase H type-2 domain in the interval 75–260 (ELIAGVDEVG…FEPIKSIIKK (186 aa)). The a divalent metal cation site is built by D81, E82, and D173.

Belongs to the RNase HII family. Requires Mn(2+) as cofactor. Mg(2+) is required as a cofactor.

Its subcellular location is the cytoplasm. The enzyme catalyses Endonucleolytic cleavage to 5'-phosphomonoester.. Functionally, endonuclease that specifically degrades the RNA of RNA-DNA hybrids. The chain is Ribonuclease HII from Streptococcus thermophilus (strain CNRZ 1066).